The primary structure comprises 364 residues: MQEIIPDFLEECEFVDTSLAGDDLFAILESLEGAGEISPTAASTPKDGTTSSKELVKDQDYENSSPKRKKQRLETRKEEDEEEEDGDGEAEEDNKQDGQQKMSHVTVERNRRKQMNEHLTVLRSLMPCFYVKRGDQASIIGGVVEYISELQQVLQSLEAKKQRKTYAEVLSPRVVPSPRPSPPVLSPRKPPLSPRINHHQIHHHLLLPPISPRTPQPTSPYRAIPPQLPLIPQPPLRSYSSLASCSSLGDPPPYSPASSSSSPSVSSNHESSVINELVANSKSALADVEVKFSGANVLLKTVSHKIPGQVMKIIAALEDLALEILQVNINTVDETMLNSFTIKIGIECQLSAEELAQQIQQTFC.

Residues 35 to 109 (GEISPTAAST…QKMSHVTVER (75 aa)) form a disordered region. S38 carries the post-translational modification Phosphoserine; by ASK7. A Phosphothreonine; by ASK7 modification is found at T40. Polar residues predominate over residues 40–53 (TAASTPKDGTTSSK). The residue at position 43 (S43) is a Phosphoserine; by ASK7. T44 carries the phosphothreonine; by ASK7 modification. Residue S65 is modified to Phosphoserine; by ASK7. A compositionally biased stretch (acidic residues) spans 79–92 (EDEEEEDGDGEAEE). The basic motif stretch occupies residues 99-112 (QQKMSHVTVERNRR). Positions 99-150 (QQKMSHVTVERNRRKQMNEHLTVLRSLMPCFYVKRGDQASIIGGVVEYISEL) constitute a bHLH domain. Positions 113-150 (KQMNEHLTVLRSLMPCFYVKRGDQASIIGGVVEYISEL) are helix-loop-helix motif. S171 carries the phosphoserine; by ASK7 modification. Residues 171 to 227 (SPRVVPSPRPSPPVLSPRKPPLSPRINHHQIHHHLLLPPISPRTPQPTSPYRAIPPQ) are disordered. The span at 175-193 (VPSPRPSPPVLSPRKPPLS) shows a compositional bias: pro residues. S177 is subject to Phosphoserine; by ASK7, MPK3 and MPK6. At S181 the chain carries Phosphoserine; by ASK7. S186 carries the post-translational modification Phosphoserine; by CDKA-1, ASK7, MPK3 and MPK6. S193 carries the post-translational modification Phosphoserine; by MPK3 and MPK6. Over residues 196 to 205 (INHHQIHHHL) the composition is skewed to basic residues. Pro residues predominate over residues 209–218 (PISPRTPQPT). Residue S211 is modified to Phosphoserine; by MPK3 and MPK6. T214 is modified (phosphothreonine; by ASK7, MPK3 and MPK6). The residue at position 219 (S219) is a Phosphoserine; by ASK7, MPK3 and MPK6.

In terms of assembly, homodimer. Forms dimers with SCRM and SCRM2. May interact with CDKA-1. Post-translationally, phosphorylated by ASK7/BIN2 and ASK3/SK12; this post-translational modification inhibits activity and limit epidermal cell proliferation. Phosphorylation by MPK3 and MPK6 leads to the inhibition of stomatal fate and to degradation. Stabilized by CDKA-1-mediated phosphorylation at Ser-186 which promotes stomatal development. Expressed in developing leaf epidermis. Reduced accumulation in the stomatal lineage ground cells (SLGCs) where BASL is polarized in the cell cortex. Observed in small cells of non-protruding hypocotyl cell files and of developing cotyledon epidermis. Restricted to meristemoids (stomatal precursor cell) in leaves epidermis, mostly in dividing cells of non-protruding cell files.

The protein localises to the nucleus. With respect to regulation, negatively regulated through phosphorylation by the MAPK module. Activity is constrained by polarized BASL in stomatal lineage ground cells (SLGCs) undergoing ACD. Functionally, transcription factor acting as an integration node for stomata and brassinosteroid (BR) signaling pathways to control stomatal initiation and development. Activates transcription when in the presence of SCRM/ICE1. Functions as a dimer with SCRM or SCRM2 during stomatal initiation. Required for the initiation, the spacing and the formation of stomata, by promoting the first asymmetric cell divisions. Together with FMA and MUTE, modulates the stomata formation. Involved in the regulation of growth reduction under osmotic stress (e.g. mannitol), associated with a quick decrease of meristemoid mother cells (MMCs) number lower stomatal index and density. This Arabidopsis thaliana (Mouse-ear cress) protein is Transcription factor SPEECHLESS.